A 657-amino-acid polypeptide reads, in one-letter code: Archaeal Lon protease (657 aa).

The Cytoplasmic segment spans residues 1-123; it reads MEENIESVEE…KAEREKRDRS (123 aa). 57 to 64 lines the ATP pocket; sequence GEPGTGKS. The helical transmembrane segment at 124–144 threads the bilayer; the sequence is RSIMFVIFSVVLLGIIAAIVL. Arg145 is a topological domain (extracellular). A helical transmembrane segment spans residues 146–166; the sequence is SITLIFFAIMAAAFLYMAMAF. The Cytoplasmic portion of the chain corresponds to 167 to 657; it reads NPVIRNERAM…ATTRAGNNAA (491 aa). The Lon proteolytic domain occupies 433–618; sequence GSVVGMVNGL…EDVLRVALVN (186 aa). Active-site residues include Ser525 and Lys568.

It belongs to the peptidase S16 family. Archaeal LonB subfamily. As to quaternary structure, homohexamer. Organized in a ring with a central cavity.

The protein localises to the cell membrane. ATP-dependent serine protease that mediates the selective degradation of mutant and abnormal proteins as well as certain short-lived regulatory proteins. Degrades polypeptides processively. The sequence is that of Archaeal Lon protease from Thermoplasma acidophilum (strain ATCC 25905 / DSM 1728 / JCM 9062 / NBRC 15155 / AMRC-C165).